A 304-amino-acid polypeptide reads, in one-letter code: Acetylglutamate kinase (304 aa).

Residues 72 to 73 (GG), R94, and N199 each bind substrate.

Belongs to the acetylglutamate kinase family. ArgB subfamily.

The protein localises to the cytoplasm. It catalyses the reaction N-acetyl-L-glutamate + ATP = N-acetyl-L-glutamyl 5-phosphate + ADP. Its pathway is amino-acid biosynthesis; L-arginine biosynthesis; N(2)-acetyl-L-ornithine from L-glutamate: step 2/4. In terms of biological role, catalyzes the ATP-dependent phosphorylation of N-acetyl-L-glutamate. This chain is Acetylglutamate kinase, found in Methylobacterium nodulans (strain LMG 21967 / CNCM I-2342 / ORS 2060).